The chain runs to 511 residues: Coatomer subunit delta (511 aa).

Positions 168–177 are enriched in basic and acidic residues; the sequence is QARRDAERQG. A disordered region spans residues 168 to 188; it reads QARRDAERQGKKAPGFGGFGS. Position 223 is a phosphoserine (Ser-223). N6-acetyllysine occurs at positions 233 and 241. Position 244 is a phosphoserine (Ser-244). Positions 271-511 constitute an MHD domain; that stretch reads MESVHMKIEE…TFLVDKYEIL (241 aa). An N6-acetyllysine mark is found at Lys-309 and Lys-351. Phosphoserine is present on Ser-493.

Belongs to the adaptor complexes medium subunit family. Delta-COP subfamily. In terms of assembly, oligomeric complex that consists of at least the alpha, beta, beta', gamma, delta, epsilon and zeta subunits.

The protein resides in the cytoplasm. Its subcellular location is the golgi apparatus membrane. It is found in the cytoplasmic vesicle. The protein localises to the COPI-coated vesicle membrane. The coatomer is a cytosolic protein complex that binds to dilysine motifs and reversibly associates with Golgi non-clathrin-coated vesicles, which further mediate biosynthetic protein transport from the ER, via the Golgi up to the trans Golgi network. Coatomer complex is required for budding from Golgi membranes, and is essential for the retrograde Golgi-to-ER transport of dilysine-tagged proteins. In mammals, the coatomer can only be recruited by membranes associated to ADP-ribosylation factors (ARFs), which are small GTP-binding proteins; the complex also influences the Golgi structural integrity, as well as the processing, activity, and endocytic recycling of LDL receptors. In Rattus norvegicus (Rat), this protein is Coatomer subunit delta (Arcn1).